A 72-amino-acid polypeptide reads, in one-letter code: MNFRFPFLLMITISLIGAVLTFGNDVRPRNQYGNEIFCPHQGFNQKCNAICKRKKYLLGFCDQKTCLCKVRP.

An N-terminal signal peptide occupies residues 1-21 (MNFRFPFLLMITISLIGAVLT). Cystine bridges form between Cys-38-Cys-61, Cys-47-Cys-66, and Cys-51-Cys-68.

It belongs to the long (3 C-C) scorpion toxin superfamily. In terms of tissue distribution, expressed by the venom gland.

It is found in the secreted. Functionally, binds to sodium channels (Nav) and affects the channel activation process. The chain is Putative sodium channel toxin Ts18 from Tityus serrulatus (Brazilian scorpion).